The following is a 451-amino-acid chain: Tetraspanin-14 (451 aa).

Residues 1–56 (MPHRAPRRFMKTAPGACDWEQCLLMGSGEPTRARAVVSSSHKQRKPRQEISACLKW) are Cytoplasmic-facing. Residues 20-24 (EQCLL) carry the Basolateral membrane targeting motif. The chain crosses the membrane as a helical span at residues 57–77 (LVFLLNSIVFLVGVGILALGV). At 78 to 96 (YLFIKDFREVKLVDIILNP) the chain is on the extracellular side. Residues 97–117 (AILISIFGFSICVVSFFGFMG) traverse the membrane as a helical segment. The Cytoplasmic portion of the chain corresponds to 118-130 (ALRDNIFLLKCFA). The chain crosses the membrane as a helical span at residues 131 to 151 (ACVFLSYILVVAVTLVFFTLF). The Extracellular segment spans residues 152-285 (YTDTTEGLSA…QPLRTLFESH (134 aa)). N-linked (GlcNAc...) asparagine glycans are attached at residues Asn-205 and Asn-211. A helical membrane pass occupies residues 286 to 306 (AVHVGAFVALLIVPVCISVCL). Residues 307 to 451 (TNILAKQVDH…TDLVPQKSKS (145 aa)) are Cytoplasmic-facing. The interval 328–451 (NDRRRKRDHN…TDLVPQKSKS (124 aa)) is disordered. Residues 366-376 (PDIPPPLPPIE) are compositionally biased toward pro residues. Positions 410 to 434 (ATTTRTPPAAAGPAPTPQATTTNRT) are enriched in low complexity. The span at 435 to 444 (HQWVLQQTDL) shows a compositional bias: polar residues.

It belongs to the tetraspanin (TM4SF) family. Expressed in the germline, particularly in sperm cells. As to expression, expressed in the germline (particularly in sperm cells), anterior sensory cilia, hypodermis and vulva (at protein level). In terms of tissue distribution, expressed in the pharynx, hypodermis and vulva (at protein level).

Its subcellular location is the cell membrane. It is found in the cytoplasmic vesicle membrane. The protein localises to the endosome membrane. It localises to the early endosome membrane. The protein resides in the late endosome membrane. Its subcellular location is the recycling endosome membrane. It is found in the apical cell membrane. The protein localises to the basolateral cell membrane. Functions redundantly with tsp-12 to regulate cell surface levels of the BMP type II receptor daf-4 (but not BMP type I receptor sma-6), probably by regulating endosomal sorting and recycling of receptors, preventing their targeting to degradative lysosomes. Together with tsp-12, regulates cell fate specification in the postembryonic mesodermal M lineage, body size, male development and vulva development, probably by positively modulating BMP-like Sma/Mab signaling. Together with tsp-12 involved in maintaining the structural and functional integrity of the endosomal network. Together with tsp-12, probably acts by modulating the activation of glp-1, Notch-like receptor, to regulate germline maturation. Its function is as follows. Functions redundantly with tsp-12 to regulate cell fate specification in the postembryonic mesodermal M lineage, body size, embryonic and vulva development. Functionally, functions redundantly with tsp-12 to regulate cell fate specification in the postembryonic mesodermal M lineage. Likely plays a complementary role in mesodermal development with tsp-14 isoform a, but may be more critical. The chain is Tetraspanin-14 from Caenorhabditis elegans.